The following is a 791-amino-acid chain: Subtilisin-like protease SBT5.6 (791 aa).

The first 20 residues, M1 to C20, serve as a signal peptide directing secretion. Residues A21–H108 constitute a propeptide, activation peptide. The region spanning V26 to K104 is the Inhibitor I9 domain. The region spanning A134–A645 is the Peptidase S8 domain. The active-site Charge relay system is D160. Residues N193 and N219 are each glycosylated (N-linked (GlcNAc...) asparagine). H235 functions as the Charge relay system in the catalytic mechanism. The PA domain occupies F400–L494. N-linked (GlcNAc...) asparagine glycosylation is present at N417. S578 acts as the Charge relay system in catalysis. N-linked (GlcNAc...) asparagine glycosylation is found at N666, N713, and N761.

The protein belongs to the peptidase S8 family.

The protein resides in the secreted. This chain is Subtilisin-like protease SBT5.6, found in Arabidopsis thaliana (Mouse-ear cress).